A 309-amino-acid chain; its full sequence is Taste receptor type 2 member 43 (309 aa).

A topological domain (extracellular) is located at residue Met-1. Residues 2–22 form a helical membrane-spanning segment; that stretch reads ITFLPIIFSSLVVVTFVIGNF. At 23-46 the chain is on the cytoplasmic side; it reads ANGFIALVNSIEWFKRQKISFADQ. A helical membrane pass occupies residues 47-67; it reads ILTALAVSRVGLLWVLLLNWY. Over 68-86 the chain is Extracellular; that stretch reads LTVLNPAFNSVEVRTTAYN. The chain crosses the membrane as a helical span at residues 87–107; that stretch reads IWAVINHFSNWLATSLSIFYL. At 108-126 the chain is on the cytoplasmic side; sequence LKIANFSNFIFLHLKRRVK. Residues 127-147 form a helical membrane-spanning segment; it reads SVILVMLLGPLLFLACHLFMI. At 148–178 the chain is on the extracellular side; it reads NMNEIVRTKEFDGNMTWKIKLKSAMYFSNMT. 2 N-linked (GlcNAc...) asparagine glycosylation sites follow: Asn-161 and Asn-176. Residues 179-199 traverse the membrane as a helical segment; sequence VTMVANLVPFTLTLLSFLLLI. Topologically, residues 200–229 are cytoplasmic; it reads CSLCKHLKKMQLHGKGSQDPSTKVHIKALQ. Residues 230-250 traverse the membrane as a helical segment; sequence TVISFLLLCAIYFLSIMISVW. Over 251–259 the chain is Extracellular; it reads SFGSLENKP. Residues 260–280 form a helical membrane-spanning segment; it reads VFMFCKAIRFSYPSIHPFILI. Topologically, residues 281–309 are cytoplasmic; sequence WGNKKLKQTFLSVFWQMRYWVKGEKTSSP.

The protein belongs to the G-protein coupled receptor T2R family.

The protein resides in the membrane. It localises to the cell projection. It is found in the cilium membrane. Its function is as follows. Gustducin-coupled receptor immplicated in the perception of bitter compounds in the oral cavity and the gastrointestinal tract. Signals through PLCB2 and the calcium-regulated cation channel TRPM5. Activated by the sulfonyl amide sweeteners saccharin and acesulfame K. In airway epithelial cells, binding of bitter compounds increases the intracellular calcium ion concentration and stimulates ciliary beat frequency. May act as chemosensory receptors in airway epithelial cells to detect and eliminate potential noxious agents from the airways. The sequence is that of Taste receptor type 2 member 43 (TAS2R43) from Pan paniscus (Pygmy chimpanzee).